Reading from the N-terminus, the 132-residue chain is MSMTDPIADLLVRIKNAAAVGKQTVKLPSSKIKVAIAQVLKDEGYITDLRVTATENNKSELEIVLKYFEGRPVIETLKRFSRSGLRQYRGKTELPKVLGGLGIAIISTSKGIMTDAQAREAGVGGEVLCFVA.

The protein belongs to the universal ribosomal protein uS8 family. Part of the 30S ribosomal subunit. Contacts proteins S5 and S12.

Its function is as follows. One of the primary rRNA binding proteins, it binds directly to 16S rRNA central domain where it helps coordinate assembly of the platform of the 30S subunit. The sequence is that of Small ribosomal subunit protein uS8 from Xanthomonas campestris pv. campestris (strain 8004).